The sequence spans 179 residues: Peptide deformylase (179 aa).

Positions 102 and 144 each coordinate Fe cation. The active site involves Glu-145. Fe cation is bound at residue His-148.

The protein belongs to the polypeptide deformylase family. Fe(2+) is required as a cofactor.

The enzyme catalyses N-terminal N-formyl-L-methionyl-[peptide] + H2O = N-terminal L-methionyl-[peptide] + formate. Removes the formyl group from the N-terminal Met of newly synthesized proteins. Requires at least a dipeptide for an efficient rate of reaction. N-terminal L-methionine is a prerequisite for activity but the enzyme has broad specificity at other positions. This Wolbachia sp. subsp. Drosophila simulans (strain wRi) protein is Peptide deformylase.